The chain runs to 223 residues: Uracil-DNA glycosylase (223 aa).

Catalysis depends on Asp67, which acts as the Proton acceptor.

Belongs to the uracil-DNA glycosylase (UDG) superfamily. UNG family.

It is found in the cytoplasm. The catalysed reaction is Hydrolyzes single-stranded DNA or mismatched double-stranded DNA and polynucleotides, releasing free uracil.. Its function is as follows. Excises uracil residues from the DNA which can arise as a result of misincorporation of dUMP residues by DNA polymerase or due to deamination of cytosine. In Borrelia hermsii (strain HS1 / DAH), this protein is Uracil-DNA glycosylase.